A 309-amino-acid chain; its full sequence is Uricase (309 aa).

Ala-2 is subject to N-acetylalanine. Residues Lys-16 and Thr-63 each act as charge relay system in the active site. Positions 63, 64, 165, 182, 237, 238, and 264 each coordinate urate. Catalysis depends on His-266, which acts as the Charge relay system. The short motif at 307 to 309 (SKL) is the Microbody targeting signal element.

This sequence belongs to the uricase family.

It is found in the peroxisome. The catalysed reaction is urate + O2 + H2O = 5-hydroxyisourate + H2O2. It functions in the pathway purine metabolism; urate degradation; (S)-allantoin from urate: step 1/3. Functionally, catalyzes the oxidation of uric acid to 5-hydroxyisourate, which is further processed to form (S)-allantoin. The chain is Uricase from Arabidopsis thaliana (Mouse-ear cress).